Here is a 170-residue protein sequence, read N- to C-terminus: Acetolactate synthase small subunit (170 aa).

Positions 9–83 (TLSVLVEDKP…NVIKIVEQEE (75 aa)) constitute an ACT domain. Lys46 participates in a covalent cross-link: Isoglutamyl lysine isopeptide (Lys-Gln) (interchain with Q-Cter in protein Pup).

The protein belongs to the acetolactate synthase small subunit family. As to quaternary structure, dimer of large and small chains.

The enzyme catalyses 2 pyruvate + H(+) = (2S)-2-acetolactate + CO2. It functions in the pathway amino-acid biosynthesis; L-isoleucine biosynthesis; L-isoleucine from 2-oxobutanoate: step 1/4. It participates in amino-acid biosynthesis; L-valine biosynthesis; L-valine from pyruvate: step 1/4. The chain is Acetolactate synthase small subunit (ilvH) from Mycolicibacterium smegmatis (strain ATCC 700084 / mc(2)155) (Mycobacterium smegmatis).